The sequence spans 88 residues: Small ribosomal subunit protein bS16c (88 aa).

The protein belongs to the bacterial ribosomal protein bS16 family.

The protein localises to the plastid. It is found in the chloroplast. In Gossypium hirsutum (Upland cotton), this protein is Small ribosomal subunit protein bS16c.